Consider the following 272-residue polypeptide: HMP-PP phosphatase (272 aa).

The active-site Nucleophile is the Asp-8. Mg(2+) is bound by residues Asp-8, Asp-10, and Asp-212.

This sequence belongs to the HAD-like hydrolase superfamily. Cof family. Mg(2+) is required as a cofactor.

The catalysed reaction is 4-amino-2-methyl-5-(diphosphooxymethyl)pyrimidine + H2O = 4-amino-2-methyl-5-(phosphooxymethyl)pyrimidine + phosphate + H(+). Catalyzes the hydrolysis of 4-amino-2-methyl-5-hydroxymethylpyrimidine pyrophosphate (HMP-PP) to 4-amino-2-methyl-5-hydroxymethylpyrimidine phosphate (HMP-P). The protein is HMP-PP phosphatase of Enterobacter sp. (strain 638).